The chain runs to 216 residues: Somatotropin (216 aa).

The signal sequence occupies residues 1–26 (MAADPQSSVLLAFALLCLPWPQEVGA). Residue histidine 45 coordinates Zn(2+). A disulfide bond links cysteine 78 and cysteine 189. Position 131 is a phosphoserine (serine 131). Residue glutamate 198 participates in Zn(2+) binding. A disulfide bridge links cysteine 206 with cysteine 214.

The protein belongs to the somatotropin/prolactin family.

Its subcellular location is the secreted. Its function is as follows. Plays an important role in growth control. Its major role in stimulating body growth is to stimulate the liver and other tissues to secrete IGF1. It stimulates both the differentiation and proliferation of myoblasts. It also stimulates amino acid uptake and protein synthesis in muscle and other tissues. This is Somatotropin (GH1) from Ailuropoda melanoleuca (Giant panda).